Reading from the N-terminus, the 308-residue chain is MNQTTHRCGWVALIGPPNAGKSTLLNALIGQKVAIVTSKPQTTRNQIVGILSRKDAQVVFMDTPGIHQLRGRLNKMLLQTAWQSMNAADALIVMLDGDLYIRKPDLLDRDIAPLVEPIAAETRPVVVVVNKIDLFRDKSKMLPLLERLSAMWPKAEVFPASALNKDGMDHLLRLIVGYMPEGPALYPEDQISTLPVRFMTAEIVREKVFNKLRQELPYSTAVDIEQWEEEEGRDQVIVNAVIYVARPSHKSMVIGKGGATIKEIGIEARKDIQELLEKRVHLELWVKVREGWTEDLGFMRSLGLSPDE.

The region spanning Arg-7–Glu-181 is the Era-type G domain. The segment at Gly-15 to Ser-22 is G1. Gly-15–Ser-22 is a GTP binding site. Residues Gln-41 to Asn-45 are G2. The tract at residues Asp-62–Gly-65 is G3. GTP-binding positions include Asp-62–Ile-66 and Asn-130–Asp-133. Residues Asn-130–Asp-133 form a G4 region. The tract at residues Ala-160–Ala-162 is G5. A KH type-2 domain is found at Leu-212 to Glu-290.

It belongs to the TRAFAC class TrmE-Era-EngA-EngB-Septin-like GTPase superfamily. Era GTPase family. As to quaternary structure, monomer.

The protein localises to the cytoplasm. It is found in the cell inner membrane. In terms of biological role, an essential GTPase that binds both GDP and GTP, with rapid nucleotide exchange. Plays a role in 16S rRNA processing and 30S ribosomal subunit biogenesis and possibly also in cell cycle regulation and energy metabolism. This is GTPase Era from Nitratidesulfovibrio vulgaris (strain DP4) (Desulfovibrio vulgaris).